Reading from the N-terminus, the 369-residue chain is MEMSSEQLNGSQVWVSSPFDLNGSLGPSNGSNQTEPYYDMTSNAVLTFIYFVVCVVGLCGNTLVIYVILRYAKMKTITNIYILNLAIADELFMLGLPFLAMQVALVHWPFGKAICRVVMTVDGINQFTSIFCLTVMSIDRYLAVVHPIKSAKWRRPRTAKMINVAVWCVSLLVILPIMIYAGLRSNQWGRSSCTINWPGESGAWYTGFIIYAFILGFLVPLTIICLCYLFIIIKVKSSGIRVGSSKRKKSEKKVTRMVSIVVAVFIFCWLPFYIFNVSSVSVAISPTPALKGMFDFVVILTYANSCANPILYAFLSDNFKKSFQNVLCLVKVSGTEDGERSDSKQDKSRLNETTETQRTLLNGDLQTSI.

Topologically, residues 1 to 43 (MEMSSEQLNGSQVWVSSPFDLNGSLGPSNGSNQTEPYYDMTSN) are extracellular. N-linked (GlcNAc...) asparagine glycosylation is found at Asn-9, Asn-22, Asn-29, and Asn-32. The helical transmembrane segment at 44–67 (AVLTFIYFVVCVVGLCGNTLVIYV) threads the bilayer. Residues 68 to 78 (ILRYAKMKTIT) lie on the Cytoplasmic side of the membrane. Residues 79–103 (NIYILNLAIADELFMLGLPFLAMQV) form a helical membrane-spanning segment. The Extracellular portion of the chain corresponds to 104–118 (ALVHWPFGKAICRVV). Cys-115 and Cys-193 are oxidised to a cystine. The helical transmembrane segment at 119–138 (MTVDGINQFTSIFCLTVMSI) threads the bilayer. Over 139–161 (DRYLAVVHPIKSAKWRRPRTAKM) the chain is Cytoplasmic. A helical transmembrane segment spans residues 162–181 (INVAVWCVSLLVILPIMIYA). Topologically, residues 182 to 207 (GLRSNQWGRSSCTINWPGESGAWYTG) are extracellular. Residues 208 to 229 (FIIYAFILGFLVPLTIICLCYL) form a helical membrane-spanning segment. Residues 230 to 253 (FIIIKVKSSGIRVGSSKRKKSEKK) are Cytoplasmic-facing. Residues 254–278 (VTRMVSIVVAVFIFCWLPFYIFNVS) form a helical membrane-spanning segment. Residues 279 to 288 (SVSVAISPTP) lie on the Extracellular side of the membrane. A helical transmembrane segment spans residues 289 to 303 (ALKGMFDFVVILTYA). Residues 304 to 369 (NSCANPILYA…LLNGDLQTSI (66 aa)) are Cytoplasmic-facing. A lipid anchor (S-palmitoyl cysteine) is attached at Cys-328. A phosphoserine mark is found at Ser-341, Ser-343, and Ser-348. Phosphothreonine occurs at positions 353 and 354.

The protein belongs to the G-protein coupled receptor 1 family. Homodimer and heterodimer with SSTR3 and SSTR5. Heterodimerization with SSTR3 inactivates SSTR3 receptor function. Heterodimerization with SSTR5 is enhanced by agonist stimulation of SSTR2 and increases SSTR2 cell growth inhibition activity. Following agonist stimulation, homodimers dissociate into monomers which is required for receptor internalization. Interacts with beta-arrestin; this interaction is necessary for receptor internalization and is destabilized by heterodimerization with SSTR5 which results in increased recycling of SSTR2 to the cell surface. Interacts (via C-terminus) with SHANK1 (via PDZ domain). Phosphorylated on serine and threonine residues in response to agonist stimulation, leading to receptor desensitization and rapid internalization. Phosphorylated to a greater extent on serine than threonine residues. Threonine phosphorylation is required for arrestin binding and receptor endocytosis but is not necessary for desensitization. In terms of tissue distribution, cerebrum and kidney.

The protein resides in the cell membrane. It localises to the cytoplasm. In terms of biological role, receptor for somatostatin-14 and -28. This receptor is coupled via pertussis toxin sensitive G proteins to inhibition of adenylyl cyclase. In addition it stimulates phosphotyrosine phosphatase and PLC via pertussis toxin insensitive as well as sensitive G proteins. Inhibits calcium entry by suppressing voltage-dependent calcium channels. Acts as the functionally dominant somatostatin receptor in pancreatic alpha- and beta-cells where it mediates the inhibitory effect of somatostatin-14 on hormone secretion. Inhibits cell growth through enhancement of MAPK1 and MAPK2 phosphorylation and subsequent up-regulation of CDKN1B. Stimulates neuronal migration and axon outgrowth and may participate in neuron development and maturation during brain development. Mediates negative regulation of insulin receptor signaling through PTPN6. Inactivates SSTR3 receptor function following heterodimerization. The polypeptide is Somatostatin receptor type 2 (Sstr2) (Mus musculus (Mouse)).